The following is a 264-amino-acid chain: Thymidylate synthase (264 aa).

Arg-21 is a dUMP binding site. Residue His-51 participates in (6R)-5,10-methylene-5,6,7,8-tetrahydrofolate binding. 126–127 (RR) is a binding site for dUMP. The active-site Nucleophile is Cys-146. DUMP contacts are provided by residues 166–169 (RSAD), Asn-177, and 207–209 (HLY). Residue Asp-169 participates in (6R)-5,10-methylene-5,6,7,8-tetrahydrofolate binding. Residue Ala-263 participates in (6R)-5,10-methylene-5,6,7,8-tetrahydrofolate binding.

This sequence belongs to the thymidylate synthase family. Bacterial-type ThyA subfamily. Homodimer.

The protein resides in the cytoplasm. The enzyme catalyses dUMP + (6R)-5,10-methylene-5,6,7,8-tetrahydrofolate = 7,8-dihydrofolate + dTMP. It participates in pyrimidine metabolism; dTTP biosynthesis. Its function is as follows. Catalyzes the reductive methylation of 2'-deoxyuridine-5'-monophosphate (dUMP) to 2'-deoxythymidine-5'-monophosphate (dTMP) while utilizing 5,10-methylenetetrahydrofolate (mTHF) as the methyl donor and reductant in the reaction, yielding dihydrofolate (DHF) as a by-product. This enzymatic reaction provides an intracellular de novo source of dTMP, an essential precursor for DNA biosynthesis. In Pseudomonas aeruginosa (strain LESB58), this protein is Thymidylate synthase.